Consider the following 220-residue polypeptide: MNVQIEESWKQHLAPEFEKDYFIRLTEFVRSEYQTATIYPPGRFIFNAFNLCPFDKVKVVIIGQDPYHGPGQAHGLCFSVNDGVPFPPSLQNIFKEIQSDLGAPIPTSGNLTRWANQGVLLLNATLTVRAHQAGSHQRRGWEEFTDAAIRVLAEQRENIVFILWGSYAQKKGAFIDRNKHLVLASAHPSPLSAYNGFFGNKHFSRTNEYLQAHGQTPIEW.

Residue D65 is the Proton acceptor of the active site.

The protein belongs to the uracil-DNA glycosylase (UDG) superfamily. UNG family.

It is found in the cytoplasm. The enzyme catalyses Hydrolyzes single-stranded DNA or mismatched double-stranded DNA and polynucleotides, releasing free uracil.. Excises uracil residues from the DNA which can arise as a result of misincorporation of dUMP residues by DNA polymerase or due to deamination of cytosine. This Phocaeicola vulgatus (strain ATCC 8482 / DSM 1447 / JCM 5826 / CCUG 4940 / NBRC 14291 / NCTC 11154) (Bacteroides vulgatus) protein is Uracil-DNA glycosylase.